A 944-amino-acid chain; its full sequence is MSDYKSTLNLPETGFPMRGDLAKREPGMLARWTDDDLYGIIRAAKKGKKTFILHDGPPYANGSIHIGHSVNKILKDIIVKSKGLSGFDSPYVPGWDCHGLPIELKVEQEFGKPGEKFTAAEFRAKCREYAATQVDGQRKDFIRLGVLGDWSHPYLTMDFKTEANIIRALGRIIKNGHLHKGAKPVHWCVDCRSALAEAEVEYYDKTSPSIDVAFRAVDQDAVKAKFGLPGVSGPVSLVIWTTTPWTLPANRAISLAPDFDYALVQIDGQAVILAKDLVESVIQRIGAAEYTILGTVKGAELELLRFTHPFMGFDVPAILGDHVTLDAGTGAVHTAPGHGPDDYVIGQKYGLETANPVGPDGAYLPGTYPTLDGVNVFKANDIVIELLKEKGALLHVEKMQHSYPCCWRHKTPIIFRATPQWFVSMDKEGLRQQSLKEIKGVQWIPDWGQARIESMVANRPDWCISRQRTWGVPMSLFVHKETQELLPIERTLAAMEEVAKRVEVDGIQAWWDLDPKEILGEDADQYEKVPDTLDVWFDSGSTSYSVVDARPEFAGHAADMYLEGSDQHRGWFMSSLMISVAMKGKAPYRQVLTHGFTVDGQGRKMSKSIGNTVSPQDVMNKLGADILRLWVASTDYTGEMAVSDEILKRAADSYRRIRNTARFLLANLNGFNPATDMVKPEEMVVLDRWAVGCAKTAQQEILKAYEAYDFHEVVQRLMRFCSVEMGSFYLDIIKDRQYTAKADSVARRSCQTALYHIAEALVRWMAPIMSFTADEIWGYLPGEREKYVFTGEWYDGLFGLEENEEFNDAFWDDVRYIKDQVNKELENQKANGIKSNLEAKVTLKYADDANGTIKKLKLLGEEVRFIFITSQFVISEQAGGIDDENIQYNAGNTTVQAVVTRAEGDKCPRCWHYTTDVGKVAEHADICGRCVSNIAGNGEQRKFA.

Residues 58-68 (PYANGSIHIGH) carry the 'HIGH' region motif. Position 563 (E563) interacts with L-isoleucyl-5'-AMP. The 'KMSKS' region motif lies at 604–608 (KMSKS). K607 provides a ligand contact to ATP. Zn(2+)-binding residues include C907, C910, C927, and C930.

The protein belongs to the class-I aminoacyl-tRNA synthetase family. IleS type 1 subfamily. In terms of assembly, monomer. Zn(2+) serves as cofactor.

It localises to the cytoplasm. It carries out the reaction tRNA(Ile) + L-isoleucine + ATP = L-isoleucyl-tRNA(Ile) + AMP + diphosphate. Catalyzes the attachment of isoleucine to tRNA(Ile). As IleRS can inadvertently accommodate and process structurally similar amino acids such as valine, to avoid such errors it has two additional distinct tRNA(Ile)-dependent editing activities. One activity is designated as 'pretransfer' editing and involves the hydrolysis of activated Val-AMP. The other activity is designated 'posttransfer' editing and involves deacylation of mischarged Val-tRNA(Ile). The protein is Isoleucine--tRNA ligase of Salmonella typhi.